The following is a 423-amino-acid chain: Dihydroorotase (423 aa).

Histidine 60 and histidine 62 together coordinate Zn(2+). Residues 62–64 (HFR) and asparagine 94 contribute to the substrate site. Zn(2+) is bound by residues aspartate 151, histidine 178, and histidine 231. Residue asparagine 277 coordinates substrate. Residue aspartate 304 participates in Zn(2+) binding. Aspartate 304 is an active-site residue. Histidine 308 contributes to the substrate binding site.

The protein belongs to the metallo-dependent hydrolases superfamily. DHOase family. Class I DHOase subfamily. Zn(2+) serves as cofactor.

It catalyses the reaction (S)-dihydroorotate + H2O = N-carbamoyl-L-aspartate + H(+). The protein operates within pyrimidine metabolism; UMP biosynthesis via de novo pathway; (S)-dihydroorotate from bicarbonate: step 3/3. Catalyzes the reversible cyclization of carbamoyl aspartate to dihydroorotate. The protein is Dihydroorotase of Lactococcus lactis subsp. lactis (strain IL1403) (Streptococcus lactis).